The following is a 198-amino-acid chain: CASP-like protein 2B1 (198 aa).

Over 1–12 the chain is Cytoplasmic; the sequence is MAAAMGLERKAK. A helical transmembrane segment spans residues 13–33; sequence VAEVALRCAVCALAALAAALV. Topologically, residues 34–55 are extracellular; the sequence is GTGSQTRTFFSLEKKARFTDMK. The chain crosses the membrane as a helical span at residues 56–76; it reads ALVLLVAAHGAAAVYSLLQLA. At 77-91 the chain is on the cytoplasmic side; it reads RCAAAAAWKGGSNGG. Residues 92–112 traverse the membrane as a helical segment; it reads AAVVAWSVFSCDQAVAYALMA. The Extracellular segment spans residues 113–149; that stretch reads ATAAALQSSVVGKRGQPELQWMPVCGLYGAFCRRVGE. A helical transmembrane segment spans residues 150-170; that stretch reads GLAAAVAAGLAAVLLAAVSAF. At 171 to 198 the chain is on the cytoplasmic side; the sequence is NLFRLYGGGGGGRKSSAGAVSGNGANTW.

Belongs to the Casparian strip membrane proteins (CASP) family. As to quaternary structure, homodimer and heterodimers.

The protein localises to the cell membrane. The sequence is that of CASP-like protein 2B1 from Oryza sativa subsp. japonica (Rice).